The sequence spans 555 residues: WRKY transcription factor WRKY24 (555 aa).

2 disordered regions span residues 133 to 183 (TAPA…AGAN) and 197 to 248 (SEMA…CTFP). Positions 163–183 (QQQQQPWGYQQQPAGMDAGAN) are enriched in low complexity. The segment at residues 214–278 (SQRRSSDDGY…YKGTHNHAKP (65 aa)) is a DNA-binding region (WRKY 1). Positions 253–259 (KKKVERS) match the Nuclear localization signal motif. The tract at residues 270 to 365 (KGTHNHAKPQ…DGEGISMAGN (96 aa)) is disordered. Composition is skewed to polar residues over residues 277 to 294 (KPQNTRRNSGSSAAQVLQ) and 310 to 320 (TAATPENSSAS). A compositionally biased stretch (basic and acidic residues) spans 347 to 356 (DSKRWRKDGD). Residues 379-444 (SDIDILDDGY…YEGKHNHDVP (66 aa)) constitute a DNA-binding region (WRKY 2). The segment at 466–555 (HPYLPNQPPP…DDMFFQNSLY (90 aa)) is transcription repression of gibberellic acid (GA)-induced promoters. Positions 514–555 (FDDARGSYMSQHQQQQRQNDAMHASRAKEEPGDDMFFQNSLY) are disordered.

This sequence belongs to the WRKY group II-a family. As to expression, expressed in aleurone cells. Mostly expressed in aleurone layers and leaves, and, to a lower extent, in roots, panicles and embryos.

The protein resides in the nucleus. Transcription activator. Interacts specifically with the W box (5'-(T)TGAC[CT]-3'), a frequently occurring elicitor-responsive cis-acting element. Negative regulator of both gibberellic acid (GA) and abscisic acid (ABA) signaling in aleurone cells, probably by interfering with GAM1, via the specific repression of GA- and ABA-induced promoters. In Oryza sativa subsp. japonica (Rice), this protein is WRKY transcription factor WRKY24.